The primary structure comprises 319 residues: Ribonucleoside-diphosphate reductase small chain (319 aa).

Fe cation is bound by residues D70, E101, and H104. The active site involves Y108. E163, E197, and H200 together coordinate Fe cation. The interval 313–319 is interaction with R1; it reads FSLDVDF.

Belongs to the ribonucleoside diphosphate reductase small chain family. As to quaternary structure, interacts with RNR1/OPG080 subunit. Can interact with host RNR1 supunit. The cofactor is Fe cation.

The catalysed reaction is a 2'-deoxyribonucleoside 5'-diphosphate + [thioredoxin]-disulfide + H2O = a ribonucleoside 5'-diphosphate + [thioredoxin]-dithiol. Its function is as follows. Ribonucleoside-diphosphate reductase holoenzyme provides the precursors necessary for viral DNA synthesis. Allows virus growth in non-dividing cells. Catalyzes the biosynthesis of deoxyribonucleotides from the corresponding ribonucleotides. This chain is Ribonucleoside-diphosphate reductase small chain (OPG048), found in Homo sapiens (Human).